A 591-amino-acid chain; its full sequence is Aspartate--tRNA(Asp/Asn) ligase (591 aa).

An L-aspartate-binding site is contributed by E175. The aspartate stretch occupies residues 199–202 (QQYK). Residues R221 and H450 each contribute to the L-aspartate site. 221 to 223 (RDE) is a binding site for ATP. E484 serves as a coordination point for ATP. Residue R491 coordinates L-aspartate. 536 to 539 (GVDR) contacts ATP.

Belongs to the class-II aminoacyl-tRNA synthetase family. Type 1 subfamily. As to quaternary structure, homodimer.

The protein resides in the cytoplasm. It carries out the reaction tRNA(Asx) + L-aspartate + ATP = L-aspartyl-tRNA(Asx) + AMP + diphosphate. Functionally, aspartyl-tRNA synthetase with relaxed tRNA specificity since it is able to aspartylate not only its cognate tRNA(Asp) but also tRNA(Asn). Reaction proceeds in two steps: L-aspartate is first activated by ATP to form Asp-AMP and then transferred to the acceptor end of tRNA(Asp/Asn). The polypeptide is Aspartate--tRNA(Asp/Asn) ligase (Rhodopseudomonas palustris (strain ATCC BAA-98 / CGA009)).